The chain runs to 293 residues: Small ribosomal subunit protein uS3 (293 aa).

The KH type-2 domain maps to 39 to 110; that stretch reads IRREIMKFLK…KISIKIKEVK (72 aa).

It belongs to the universal ribosomal protein uS3 family. As to quaternary structure, part of the 30S ribosomal subunit. Forms a tight complex with proteins S10 and S14.

Its function is as follows. Binds the lower part of the 30S subunit head. Binds mRNA in the 70S ribosome, positioning it for translation. This chain is Small ribosomal subunit protein uS3, found in Borreliella burgdorferi (strain ATCC 35210 / DSM 4680 / CIP 102532 / B31) (Borrelia burgdorferi).